Here is a 116-residue protein sequence, read N- to C-terminus: T cell receptor alpha variable 38-2/delta variable 8 (116 aa).

The first 21 residues, 1–21 (MACPGFLWALVISTCLEFSMA), serve as a signal peptide directing secretion. The Ig-like domain maps to 22–116 (QTVTQSQPEM…AAMYFCAYRS (95 aa)). Cys43 and Cys112 are joined by a disulfide. A glycan (N-linked (GlcNAc...) asparagine) is linked at Asn78.

As to quaternary structure, alpha-beta TR is a heterodimer composed of an alpha and beta chain; disulfide-linked. The alpha-beta TR is associated with the transmembrane signaling CD3 coreceptor proteins to form the TR-CD3 (TcR or TCR). The assembly of alpha-beta TR heterodimers with CD3 occurs in the endoplasmic reticulum where a single alpha-beta TR heterodimer associates with one CD3D-CD3E heterodimer, one CD3G-CD3E heterodimer and one CD247 homodimer forming a stable octameric structure. CD3D-CD3E and CD3G-CD3E heterodimers preferentially associate with TR alpha and TR beta chains, respectively. The association of the CD247 homodimer is the last step of TcR assembly in the endoplasmic reticulum and is required for transport to the cell surface.

Its subcellular location is the cell membrane. In terms of biological role, v region of the variable domain of T cell receptor (TR) alpha chain that participates in the antigen recognition. Alpha-beta T cell receptors are antigen specific receptors which are essential to the immune response and are present on the cell surface of T lymphocytes. Recognize peptide-major histocompatibility (MH) (pMH) complexes that are displayed by antigen presenting cells (APC), a prerequisite for efficient T cell adaptive immunity against pathogens. Binding of alpha-beta TR to pMH complex initiates TR-CD3 clustering on the cell surface and intracellular activation of LCK that phosphorylates the ITAM motifs of CD3G, CD3D, CD3E and CD247 enabling the recruitment of ZAP70. In turn ZAP70 phosphorylates LAT, which recruits numerous signaling molecules to form the LAT signalosome. The LAT signalosome propagates signal branching to three major signaling pathways, the calcium, the mitogen-activated protein kinase (MAPK) kinase and the nuclear factor NF-kappa-B (NF-kB) pathways, leading to the mobilization of transcription factors that are critical for gene expression and essential for T cell growth and differentiation. The T cell repertoire is generated in the thymus, by V-(D)-J rearrangement. This repertoire is then shaped by intrathymic selection events to generate a peripheral T cell pool of self-MH restricted, non-autoaggressive T cells. Post-thymic interaction of alpha-beta TR with the pMH complexes shapes TR structural and functional avidity. The chain is T cell receptor alpha variable 38-2/delta variable 8 from Homo sapiens (Human).